Reading from the N-terminus, the 245-residue chain is Probable phosphatase ECA2529 (245 aa).

Zn(2+) is bound by residues H7, H9, H15, H40, E73, H101, H131, D192, and H194.

This sequence belongs to the PHP family. Homotrimer. It depends on Zn(2+) as a cofactor.

The protein is Probable phosphatase ECA2529 of Pectobacterium atrosepticum (strain SCRI 1043 / ATCC BAA-672) (Erwinia carotovora subsp. atroseptica).